The sequence spans 385 residues: Mannitol-1-phosphate 5-dehydrogenase (385 aa).

Position 3–14 (3–14 (ALHFGAGNIGRG)) interacts with NAD(+).

The protein belongs to the mannitol dehydrogenase family.

The enzyme catalyses D-mannitol 1-phosphate + NAD(+) = beta-D-fructose 6-phosphate + NADH + H(+). The polypeptide is Mannitol-1-phosphate 5-dehydrogenase (Pasteurella multocida (strain Pm70)).